The sequence spans 77 residues: U8-lycotoxin-Ls1m (77 aa).

The N-terminal stretch at 1–20 (MKLIIFTGLVLFSIVSLIEA) is a signal peptide. The propeptide occupies 21 to 26 (QAENEK).

It belongs to the neurotoxin 19 (CSTX) family. 08 (U8-Lctx) subfamily. In terms of processing, contains 4 disulfide bonds. Expressed by the venom gland.

It localises to the secreted. The chain is U8-lycotoxin-Ls1m from Lycosa singoriensis (Wolf spider).